A 418-amino-acid chain; its full sequence is Actin-related protein 3 (418 aa).

An N-acetylmethionine modification is found at Met-1.

Belongs to the actin family. ARP3 subfamily. As to quaternary structure, component of the Arp2/3 complex composed of arpB/Arp2, arpC/Arp3, arcA/p41-arc, arcB/p34-arc, arcC/p21-arc, arcD/p20-arc and arcE/p16-arc. Interacts with carmil (via the region between the LRR domain and COOH-terminal proline-rich domain); carmil is required for Arp2/3-dependent actin nucleation. Arp2/3 complex, MyoB, MyoC, and the alpha and beta subunits of capping protein all form a larger complex with carmil.

The protein localises to the cytoplasm. It is found in the cytoskeleton. The protein resides in the cytosol. It localises to the cell cortex. Its subcellular location is the cell projection. The protein localises to the pseudopodium. Functionally, functions as ATP-binding component of the Arp2/3 complex which is involved in regulation of actin polymerization and together with an activating nucleation-promoting factor (NPF) mediates the formation of branched actin networks. Seems to contact the pointed end of the daughter actin filament. The Arp2/3 complex is involved in organizing the actin system in cell motility and chemotaxis, in phagocytosis and macropinocytosis, at late steps of endosome processing, and in mitosis. In concert with a group of other proteins, the Arp2/3 complex plays a general role in the rapid activation and adaptation of the actin system to its multiple functions. The polypeptide is Actin-related protein 3 (arpC) (Dictyostelium discoideum (Social amoeba)).